A 509-amino-acid polypeptide reads, in one-letter code: Bifunctional purine biosynthesis protein PurH (509 aa).

Positions 1–145 (MIKRALISVF…KSFKDVVVIS (145 aa)) constitute an MGS-like domain.

This sequence belongs to the PurH family.

The catalysed reaction is (6R)-10-formyltetrahydrofolate + 5-amino-1-(5-phospho-beta-D-ribosyl)imidazole-4-carboxamide = 5-formamido-1-(5-phospho-D-ribosyl)imidazole-4-carboxamide + (6S)-5,6,7,8-tetrahydrofolate. It catalyses the reaction IMP + H2O = 5-formamido-1-(5-phospho-D-ribosyl)imidazole-4-carboxamide. Its pathway is purine metabolism; IMP biosynthesis via de novo pathway; 5-formamido-1-(5-phospho-D-ribosyl)imidazole-4-carboxamide from 5-amino-1-(5-phospho-D-ribosyl)imidazole-4-carboxamide (10-formyl THF route): step 1/1. It functions in the pathway purine metabolism; IMP biosynthesis via de novo pathway; IMP from 5-formamido-1-(5-phospho-D-ribosyl)imidazole-4-carboxamide: step 1/1. The chain is Bifunctional purine biosynthesis protein PurH from Brachyspira hyodysenteriae (strain ATCC 49526 / WA1).